The chain runs to 413 residues: MPRHETDCRYFANGYCSKGNTCTFTHDVATRNENICHFNLVGKCSYGRACRFLHTRPRNDELPSCSTPQTSQNQQNLQNSGQRVRPKQLPELKFNAQAAEFVPRWKMPQRGPVTSYAGAAASADHGESSSSFQSSHEQAQLMMCPYHQKSGDCNRQDMDCPFAHGNYCDMCQQWSLHPYNAELRKKHENECVANHTTEMERAFLLQKTEQKTCGICMENIFEKNLRFGILNGCQHCFCLDCIRQWRSKDQENVELATKTVRSCPECRQHSDYVIPSLFWVESGQEKDLLIEMYKENTKRKICKYYSNERSRGACPFGNKCFYKHQLPDGSIDPGEAPSSRRRPRLVDFLFDDNSDSDEETFRRFQEEHEEEQEELLRFVAETLPEADEESELFRQITEVLRHYQISGHRRGFQ.

C3H1-type zinc fingers lie at residues 2–29 (PRHE…HDVA) and 30–57 (TRNE…HTRP). Residues 61-85 (ELPSCSTPQTSQNQQNLQNSGQRVR) form a disordered region. The span at 66–82 (STPQTSQNQQNLQNSGQ) shows a compositional bias: low complexity. Residues 138–167 (QAQLMMCPYHQKSGDCNRQDMDCPFAHGNY) form a C3H1-type 3 zinc finger. The segment at 213–267 (CGICMENIFEKNLRFGILNGCQHCFCLDCIRQWRSKDQENVELATKTVRSCPECR) adopts an RING-type zinc-finger fold. The C3H1-type 4 zinc finger occupies 296–327 (NTKRKICKYYSNERSRGACPFGNKCFYKHQLP).

As to quaternary structure, component of a complex at least containing lep-2, lin-28 and the long non-coding RNA lep-5, which mediates the degradation of lin-28. Expressed in seam, tail tip, and other hypodermal cells, head and tail neurons, the pharynx, intestine and the developing hermaphrodite somatic gonad. Not expressed in body wall muscle cells.

It localises to the cytoplasm. It carries out the reaction S-ubiquitinyl-[E2 ubiquitin-conjugating enzyme]-L-cysteine + [acceptor protein]-L-lysine = [E2 ubiquitin-conjugating enzyme]-L-cysteine + N(6)-ubiquitinyl-[acceptor protein]-L-lysine.. It participates in protein modification; protein ubiquitination. In terms of biological role, E3 ubiquitin ligase which catalyzes the covalent attachment of ubiquitin moieties onto substrate proteins. Promotes the larval to adult transition by binding to the long non-coding RNA lep-5 to target the heterochronic protein lin-28 for degradation by the proteasome. This association and degradation of lin-28 also controls the timing of the sexual differentiation of individual neurons in males including the AIM, AWA, ADF, ASJ and CEM neurons. Plays a role in governing the developmental timing of male tail tip morphogenesis. Plays a role in two aspects of male mating behavior: response to hermaphrodite contact and vulva location. May play a role in the detection of preferred food sources. The chain is E3 ubiquitin-protein ligase makorin from Caenorhabditis elegans.